A 262-amino-acid chain; its full sequence is Phosphatidylserine decarboxylase proenzyme (262 aa).

Residues Asp-86, His-142, and Ser-226 each act as charge relay system; for autoendoproteolytic cleavage activity in the active site. Catalysis depends on Ser-226, which acts as the Schiff-base intermediate with substrate; via pyruvic acid; for decarboxylase activity. A Pyruvic acid (Ser); by autocatalysis modification is found at Ser-226.

Belongs to the phosphatidylserine decarboxylase family. PSD-B subfamily. Prokaryotic type I sub-subfamily. As to quaternary structure, heterodimer of a large membrane-associated beta subunit and a small pyruvoyl-containing alpha subunit. Pyruvate serves as cofactor. Post-translationally, is synthesized initially as an inactive proenzyme. Formation of the active enzyme involves a self-maturation process in which the active site pyruvoyl group is generated from an internal serine residue via an autocatalytic post-translational modification. Two non-identical subunits are generated from the proenzyme in this reaction, and the pyruvate is formed at the N-terminus of the alpha chain, which is derived from the carboxyl end of the proenzyme. The autoendoproteolytic cleavage occurs by a canonical serine protease mechanism, in which the side chain hydroxyl group of the serine supplies its oxygen atom to form the C-terminus of the beta chain, while the remainder of the serine residue undergoes an oxidative deamination to produce ammonia and the pyruvoyl prosthetic group on the alpha chain. During this reaction, the Ser that is part of the protease active site of the proenzyme becomes the pyruvoyl prosthetic group, which constitutes an essential element of the active site of the mature decarboxylase.

The protein resides in the cell membrane. It carries out the reaction a 1,2-diacyl-sn-glycero-3-phospho-L-serine + H(+) = a 1,2-diacyl-sn-glycero-3-phosphoethanolamine + CO2. The protein operates within phospholipid metabolism; phosphatidylethanolamine biosynthesis; phosphatidylethanolamine from CDP-diacylglycerol: step 2/2. Functionally, catalyzes the formation of phosphatidylethanolamine (PtdEtn) from phosphatidylserine (PtdSer). In Bacillus cereus (strain B4264), this protein is Phosphatidylserine decarboxylase proenzyme.